Here is a 288-residue protein sequence, read N- to C-terminus: Shikimate dehydrogenase (NADP(+)) (288 aa).

Residues 18–20 (SRS) and Thr65 each bind shikimate. Lys69 serves as the catalytic Proton acceptor. Glu81 contributes to the NADP(+) binding site. The shikimate site is built by Asn90 and Asp106. NADP(+)-binding positions include 131-135 (GAGGA), 155-160 (NRTLAK), and Met223. Tyr225 serves as a coordination point for shikimate. Gly246 is an NADP(+) binding site.

The protein belongs to the shikimate dehydrogenase family. Homodimer.

It catalyses the reaction shikimate + NADP(+) = 3-dehydroshikimate + NADPH + H(+). Its pathway is metabolic intermediate biosynthesis; chorismate biosynthesis; chorismate from D-erythrose 4-phosphate and phosphoenolpyruvate: step 4/7. Its function is as follows. Involved in the biosynthesis of the chorismate, which leads to the biosynthesis of aromatic amino acids. Catalyzes the reversible NADPH linked reduction of 3-dehydroshikimate (DHSA) to yield shikimate (SA). The sequence is that of Shikimate dehydrogenase (NADP(+)) from Verminephrobacter eiseniae (strain EF01-2).